Here is a 399-residue protein sequence, read N- to C-terminus: uncharacterized protein (399 aa).

The next 5 membrane-spanning stretches (helical) occupy residues 26–46 (LLTIIGIVIGVLAMVSLISLG), 266–286 (VITIFVVGVAAISLLVGAVGI), 301–321 (IGILKALGAETTDILAIFVVE), 324–344 (FLGLFGGIVGLVLGILLAEVI), and 358–378 (AWISWELIVGVLIFSFLVGVI).

The protein belongs to the ABC-4 integral membrane protein family.

Its subcellular location is the cell membrane. This is an uncharacterized protein from Methanocaldococcus jannaschii (strain ATCC 43067 / DSM 2661 / JAL-1 / JCM 10045 / NBRC 100440) (Methanococcus jannaschii).